A 275-amino-acid polypeptide reads, in one-letter code: Formamidopyrimidine-DNA glycosylase (275 aa).

Catalysis depends on P2, which acts as the Schiff-base intermediate with DNA. The active-site Proton donor is E3. The active-site Proton donor; for beta-elimination activity is K58. Residues H91, R109, and R154 each coordinate DNA. Residues A240–K274 form an FPG-type zinc finger. R264 (proton donor; for delta-elimination activity) is an active-site residue.

The protein belongs to the FPG family. In terms of assembly, monomer. Requires Zn(2+) as cofactor.

It carries out the reaction Hydrolysis of DNA containing ring-opened 7-methylguanine residues, releasing 2,6-diamino-4-hydroxy-5-(N-methyl)formamidopyrimidine.. The enzyme catalyses 2'-deoxyribonucleotide-(2'-deoxyribose 5'-phosphate)-2'-deoxyribonucleotide-DNA = a 3'-end 2'-deoxyribonucleotide-(2,3-dehydro-2,3-deoxyribose 5'-phosphate)-DNA + a 5'-end 5'-phospho-2'-deoxyribonucleoside-DNA + H(+). In terms of biological role, involved in base excision repair of DNA damaged by oxidation or by mutagenic agents. Acts as a DNA glycosylase that recognizes and removes damaged bases. Has a preference for oxidized purines, such as 7,8-dihydro-8-oxoguanine (8-oxoG). Has AP (apurinic/apyrimidinic) lyase activity and introduces nicks in the DNA strand. Cleaves the DNA backbone by beta-delta elimination to generate a single-strand break at the site of the removed base with both 3'- and 5'-phosphates. In Bordetella pertussis (strain Tohama I / ATCC BAA-589 / NCTC 13251), this protein is Formamidopyrimidine-DNA glycosylase.